The sequence spans 254 residues: Protein Thf1 (254 aa).

Residues 182 to 241 (EEKMKKDLDLYRSNLEKMNQVLEVLEDALAVERQRREKAEAEAKAKTAEATVATETNDEQ) adopt a coiled-coil conformation. Residues 215–228 (QRREKAEAEAKAKT) show a composition bias toward basic and acidic residues. A disordered region spans residues 215-254 (QRREKAEAEAKAKTAEATVATETNDEQDEQKETSESGSDA).

This sequence belongs to the THF1 family.

In terms of biological role, may be involved in photosynthetic membrane biogenesis. This is Protein Thf1 from Picosynechococcus sp. (strain ATCC 27264 / PCC 7002 / PR-6) (Agmenellum quadruplicatum).